The following is a 277-amino-acid chain: 3-methyl-2-oxobutanoate hydroxymethyltransferase (277 aa).

Positions 43 and 82 each coordinate Mg(2+). 3-methyl-2-oxobutanoate contacts are provided by residues 43–44 (DS), aspartate 82, and lysine 112. Mg(2+) is bound at residue glutamate 114. Catalysis depends on glutamate 181, which acts as the Proton acceptor.

It belongs to the PanB family. Homodecamer; pentamer of dimers. Mg(2+) serves as cofactor.

The protein localises to the cytoplasm. The enzyme catalyses 3-methyl-2-oxobutanoate + (6R)-5,10-methylene-5,6,7,8-tetrahydrofolate + H2O = 2-dehydropantoate + (6S)-5,6,7,8-tetrahydrofolate. Its pathway is cofactor biosynthesis; (R)-pantothenate biosynthesis; (R)-pantoate from 3-methyl-2-oxobutanoate: step 1/2. Functionally, catalyzes the reversible reaction in which hydroxymethyl group from 5,10-methylenetetrahydrofolate is transferred onto alpha-ketoisovalerate to form ketopantoate. In Listeria monocytogenes serotype 4b (strain CLIP80459), this protein is 3-methyl-2-oxobutanoate hydroxymethyltransferase.